A 315-amino-acid chain; its full sequence is DNA-directed RNA polymerase subunit alpha (315 aa).

Residues 1–228 (MLEIEKPKIE…EHLRLFVGLT (228 aa)) form an alpha N-terminal domain (alpha-NTD) region. The segment at 245–315 (KNKLLEMPIE…LGLDLRHDEE (71 aa)) is alpha C-terminal domain (alpha-CTD).

This sequence belongs to the RNA polymerase alpha chain family. As to quaternary structure, homodimer. The RNAP catalytic core consists of 2 alpha, 1 beta, 1 beta' and 1 omega subunit. When a sigma factor is associated with the core the holoenzyme is formed, which can initiate transcription.

It catalyses the reaction RNA(n) + a ribonucleoside 5'-triphosphate = RNA(n+1) + diphosphate. Its function is as follows. DNA-dependent RNA polymerase catalyzes the transcription of DNA into RNA using the four ribonucleoside triphosphates as substrates. This Desulforudis audaxviator (strain MP104C) protein is DNA-directed RNA polymerase subunit alpha.